A 481-amino-acid polypeptide reads, in one-letter code: UDP-glucose 6-dehydrogenase (481 aa).

Residues 16 to 21, Asp-41, Lys-46, 94 to 98, 135 to 136, and Glu-172 each bind NAD(+); these read GAGYVG, VNTPT, and ST. Substrate contacts are provided by residues 168-172, 227-231, Arg-267, and 274-280; these read EFLAE, KLVAN, and QASVGFG. Catalysis depends on Cys-283, which acts as the Nucleophile. 283–286 contacts NAD(+); that stretch reads CFQK. A substrate-binding site is contributed by 345 to 346; sequence FK. Arg-353 lines the NAD(+) pocket. Arg-447 contacts substrate.

This sequence belongs to the UDP-glucose/GDP-mannose dehydrogenase family. Expressed in the vulva and in oocytes.

It catalyses the reaction UDP-alpha-D-glucose + 2 NAD(+) + H2O = UDP-alpha-D-glucuronate + 2 NADH + 3 H(+). It functions in the pathway nucleotide-sugar biosynthesis; UDP-alpha-D-glucuronate biosynthesis; UDP-alpha-D-glucuronate from UDP-alpha-D-glucose: step 1/1. Functionally, involved in the biosynthesis of glycosaminoglycans; hyaluronan, chondroitin sulfate, and heparan sulfate. The polypeptide is UDP-glucose 6-dehydrogenase (sqv-4) (Caenorhabditis elegans).